Reading from the N-terminus, the 111-residue chain is Ribonuclease P protein component (111 aa).

The protein belongs to the RnpA family. As to quaternary structure, consists of a catalytic RNA component (M1 or rnpB) and a protein subunit.

The enzyme catalyses Endonucleolytic cleavage of RNA, removing 5'-extranucleotides from tRNA precursor.. Functionally, RNaseP catalyzes the removal of the 5'-leader sequence from pre-tRNA to produce the mature 5'-terminus. It can also cleave other RNA substrates such as 4.5S RNA. The protein component plays an auxiliary but essential role in vivo by binding to the 5'-leader sequence and broadening the substrate specificity of the ribozyme. The chain is Ribonuclease P protein component from Clostridium botulinum (strain 657 / Type Ba4).